We begin with the raw amino-acid sequence, 819 residues long: Nuclear pore complex protein Nup93 (819 aa).

A Phosphothreonine modification is found at Thr-49. Residues Ser-52, Ser-66, Ser-72, Ser-75, Ser-80, Ser-430, and Ser-767 each carry the phosphoserine modification.

Belongs to the nucleoporin interacting component (NIC) family. Part of the nuclear pore complex (NPC). Component of the p62 complex, a complex composed of NUP62 and NUP54. Forms a complex with NUP35, NUP155, NUP205 and lamin B; the interaction with NUP35 is direct. Does not interact with TPR. Interacts with SMAD4 and IPO7; translocates SMAD4 to the nucleus through the NPC upon BMP7 stimulation resulting in activation of SMAD4 signaling. As to quaternary structure, (Microbial infection) Interacts with SARS-CoV translation inhibitor nsp1; this interaction may disrupt nuclear pore function.

The protein resides in the nucleus membrane. It is found in the nucleus. The protein localises to the nuclear pore complex. It localises to the nucleus envelope. Its function is as follows. Plays a role in the nuclear pore complex (NPC) assembly and/or maintenance. May anchor nucleoporins, but not NUP153 and TPR, to the NPC. During renal development, regulates podocyte migration and proliferation through SMAD4 signaling. This Homo sapiens (Human) protein is Nuclear pore complex protein Nup93 (NUP93).